The primary structure comprises 119 residues: Large ribosomal subunit protein bL20 (119 aa).

It belongs to the bacterial ribosomal protein bL20 family.

Its function is as follows. Binds directly to 23S ribosomal RNA and is necessary for the in vitro assembly process of the 50S ribosomal subunit. It is not involved in the protein synthesizing functions of that subunit. This is Large ribosomal subunit protein bL20 from Bacillus pumilus (strain SAFR-032).